Here is a 684-residue protein sequence, read N- to C-terminus: Beta-mannosyltransferase 1 (684 aa).

At 1-28 (MDKFIQSFSHQYLDSSSSLKLTARRKRK) the chain is on the cytoplasmic side. Residues 29-49 (LTILGLFLFSLISLMIIISYS) form a helical membrane-spanning segment. Residues 50–684 (NNNILPGLSG…KFCKIYGETF (635 aa)) are Extracellular-facing. The N-linked (GlcNAc...) asparagine glycan is linked to Asn297.

The protein belongs to the BMT family.

It is found in the membrane. Beta-mannosyltransferase involved in cell wall biosynthesis. Required for addition of the first beta-mannose residue to acid-stable fraction of cell wall phosphopeptidomannan. Plays a key role in reducing host inflammatory response. This chain is Beta-mannosyltransferase 1 (BMT1), found in Candida albicans (strain SC5314 / ATCC MYA-2876) (Yeast).